Consider the following 140-residue polypeptide: Glycine cleavage system H protein (140 aa).

Positions 22–104 (EVVIGITRFA…YGKGWMLRLK (83 aa)) constitute a Lipoyl-binding domain. Residue lysine 63 is modified to N6-lipoyllysine.

It belongs to the GcvH family. As to quaternary structure, the glycine cleavage system is composed of four proteins: P, T, L and H. (R)-lipoate serves as cofactor.

The glycine cleavage system catalyzes the degradation of glycine. The H protein shuttles the methylamine group of glycine from the P protein to the T protein. The polypeptide is Glycine cleavage system H protein (Magnetococcus marinus (strain ATCC BAA-1437 / JCM 17883 / MC-1)).